The sequence spans 461 residues: Phosphoglucosamine mutase (461 aa).

S107 functions as the Phosphoserine intermediate in the catalytic mechanism. Positions 107, 254, 256, and 258 each coordinate Mg(2+). S107 carries the post-translational modification Phosphoserine.

The protein belongs to the phosphohexose mutase family. Requires Mg(2+) as cofactor. In terms of processing, activated by phosphorylation.

It catalyses the reaction alpha-D-glucosamine 1-phosphate = D-glucosamine 6-phosphate. Catalyzes the conversion of glucosamine-6-phosphate to glucosamine-1-phosphate. The polypeptide is Phosphoglucosamine mutase (Bifidobacterium longum subsp. infantis (strain ATCC 15697 / DSM 20088 / JCM 1222 / NCTC 11817 / S12)).